Reading from the N-terminus, the 230-residue chain is Large ribosomal subunit protein uL1 (230 aa).

The protein belongs to the universal ribosomal protein uL1 family. In terms of assembly, part of the 50S ribosomal subunit.

In terms of biological role, binds directly to 23S rRNA. The L1 stalk is quite mobile in the ribosome, and is involved in E site tRNA release. Functionally, protein L1 is also a translational repressor protein, it controls the translation of the L11 operon by binding to its mRNA. The protein is Large ribosomal subunit protein uL1 of Rhodopseudomonas palustris (strain BisA53).